The chain runs to 396 residues: 3-amino-4-hydroxybenzoate 2-monooxygenase PtmB3 (396 aa).

Residues A19, 38 to 39 (EQ), and R112 contribute to the FAD site. The active-site Proton acceptor is Y217. FAD is bound at residue D295. The interval 352-371 (RERGHEFHLPDGPQQRLRDR) is disordered.

This sequence belongs to the 6-hydroxynicotinate 3-monooxygenase family. It depends on FAD as a cofactor.

It carries out the reaction 3-amino-4-hydroxybenzoate + NADPH + O2 + H(+) = 3-amino-2,4-dihydroxybenzoate + NADP(+) + H2O. It participates in antibiotic biosynthesis. Functionally, part of a gene cluster involved in the biosynthesis of thioplatensimycin (thioPTM) and platensimycin (PTM), potent and selective inhibitors of bacterial and mammalian fatty acid synthases. Catalyzes the hydroxylation of 3-amino-4-hydroxybenzoate (3,4-AHBA) to 3-amino-2,4-dihydroxybenzoate (3,2,4-ADHBA). The chain is 3-amino-4-hydroxybenzoate 2-monooxygenase PtmB3 from Streptomyces platensis.